The chain runs to 490 residues: Protein nucleotidyltransferase YdiU (490 aa).

Residues glycine 89, glycine 91, arginine 92, lysine 112, aspartate 124, glycine 125, arginine 175, and arginine 182 each coordinate ATP. The active-site Proton acceptor is the aspartate 251. The Mg(2+) site is built by asparagine 252 and aspartate 261. ATP is bound at residue aspartate 261.

The protein belongs to the SELO family. Mg(2+) serves as cofactor. It depends on Mn(2+) as a cofactor.

It catalyses the reaction L-seryl-[protein] + ATP = 3-O-(5'-adenylyl)-L-seryl-[protein] + diphosphate. The catalysed reaction is L-threonyl-[protein] + ATP = 3-O-(5'-adenylyl)-L-threonyl-[protein] + diphosphate. It carries out the reaction L-tyrosyl-[protein] + ATP = O-(5'-adenylyl)-L-tyrosyl-[protein] + diphosphate. The enzyme catalyses L-histidyl-[protein] + UTP = N(tele)-(5'-uridylyl)-L-histidyl-[protein] + diphosphate. It catalyses the reaction L-seryl-[protein] + UTP = O-(5'-uridylyl)-L-seryl-[protein] + diphosphate. The catalysed reaction is L-tyrosyl-[protein] + UTP = O-(5'-uridylyl)-L-tyrosyl-[protein] + diphosphate. Nucleotidyltransferase involved in the post-translational modification of proteins. It can catalyze the addition of adenosine monophosphate (AMP) or uridine monophosphate (UMP) to a protein, resulting in modifications known as AMPylation and UMPylation. This chain is Protein nucleotidyltransferase YdiU, found in Vibrio vulnificus (strain CMCP6).